Reading from the N-terminus, the 274-residue chain is Ubiquinone biosynthesis O-methyltransferase, mitochondrial (274 aa).

The N-terminal 30 residues, 1–30, are a transit peptide targeting the mitochondrion; it reads MNSMNILNKVKNVKSYTRLVRQGFLSQQRN. S-adenosyl-L-methionine is bound by residues Arg65, Gly88, Asp109, and Met154. Glu155, Glu158, and His159 together coordinate Mg(2+).

This sequence belongs to the class I-like SAM-binding methyltransferase superfamily. UbiG/COQ3 family. In terms of assembly, component of a multi-subunit COQ enzyme complex, composed of at least coq3, coq4, coq5, coq6, coq7 and coq9. Mg(2+) is required as a cofactor.

It localises to the mitochondrion inner membrane. The catalysed reaction is 3,4-dihydroxy-5-(all-trans-decaprenyl)benzoate + S-adenosyl-L-methionine = 4-hydroxy-3-methoxy-5-(all-trans-decaprenyl)benzoate + S-adenosyl-L-homocysteine + H(+). It carries out the reaction a 3-demethylubiquinone + S-adenosyl-L-methionine = a ubiquinone + S-adenosyl-L-homocysteine. It catalyses the reaction 3-demethylubiquinol-10 + S-adenosyl-L-methionine = ubiquinol-10 + S-adenosyl-L-homocysteine + H(+). Its pathway is cofactor biosynthesis; ubiquinone biosynthesis. O-methyltransferase required for two non-consecutive steps during ubiquinone biosynthesis. Catalyzes the 2 O-methylation of 3,4-dihydroxy-5-(all-trans-decaprenyl)benzoic acid into 4-hydroxy-3-methoxy-5-(all-trans-decaprenyl)benzoic acid. Also catalyzes the last step of ubiquinone biosynthesis by mediating methylation of 3-demethylubiquinone into ubiquinone. Also able to mediate the methylation of 3-demethylubiquinol-10 into ubiquinol-10. The chain is Ubiquinone biosynthesis O-methyltransferase, mitochondrial from Schizosaccharomyces pombe (strain 972 / ATCC 24843) (Fission yeast).